We begin with the raw amino-acid sequence, 381 residues long: Acetylornithine deacetylase (381 aa).

Zn(2+) is bound at residue His-79. Residue Asp-81 is part of the active site. Asp-111 provides a ligand contact to Zn(2+). Glu-143 is a catalytic residue. Zn(2+) contacts are provided by Glu-144, Glu-168, and His-354.

It belongs to the peptidase M20A family. ArgE subfamily. As to quaternary structure, homodimer. Zn(2+) serves as cofactor. The cofactor is Co(2+). Glutathione is required as a cofactor.

The protein localises to the cytoplasm. It carries out the reaction N(2)-acetyl-L-ornithine + H2O = L-ornithine + acetate. It functions in the pathway amino-acid biosynthesis; L-arginine biosynthesis; L-ornithine from N(2)-acetyl-L-ornithine (linear): step 1/1. Functionally, catalyzes the hydrolysis of the amide bond of N(2)-acetylated L-amino acids. Cleaves the acetyl group from N-acetyl-L-ornithine to form L-ornithine, an intermediate in L-arginine biosynthesis pathway, and a branchpoint in the synthesis of polyamines. This chain is Acetylornithine deacetylase, found in Buchnera aphidicola subsp. Acyrthosiphon pisum (strain Tuc7).